A 250-amino-acid chain; its full sequence is MTIKEIKELLKGDVSEEEIANLEKDSRSGVQKLLISYRKKQKKLFEKKQAFLERFLYEKQFWQKGQLVAGVDEVGRGPLAGPVVTAAVIIDQDFDLLDVNDSKKLSPEKRLKLYPKILEEAVSVAVGVKNAQVIDQINIYEADRQAMAQAVNALDIKPDALLVDAMNVPVDLPQIELIKGDAKSNSIAAASIVAKVFRDKLMDDYDKIYPHYGFSRNAGYGTKEHIDALKQYGPTHIHRKTFAPVSDFFK.

The RNase H type-2 domain occupies 66-250; it reads QLVAGVDEVG…TFAPVSDFFK (185 aa). A divalent metal cation-binding residues include Asp72, Glu73, and Asp164.

Belongs to the RNase HII family. Requires Mn(2+) as cofactor. Mg(2+) serves as cofactor.

It localises to the cytoplasm. It catalyses the reaction Endonucleolytic cleavage to 5'-phosphomonoester.. Its function is as follows. Endonuclease that specifically degrades the RNA of RNA-DNA hybrids. The polypeptide is Ribonuclease HII (Lactobacillus acidophilus (strain ATCC 700396 / NCK56 / N2 / NCFM)).